The sequence spans 176 residues: Mitochondrial inner membrane protein Mpv17 (176 aa).

4 helical membrane passes run 18 to 38 (VQVLTAGSLMGLGDIISQQLV), 57 to 77 (LGCGFVGPVVGGWYRVLDHLI), 94 to 114 (GGFAPCFLGCFLPLVGVLNGM), and 131 to 151 (LITNYYLWPAVQLANFYLVPL).

Belongs to the peroxisomal membrane protein PXMP2/4 family.

The protein resides in the mitochondrion inner membrane. Non-selective channel that modulates the membrane potential under normal conditions and oxidative stress, and is involved in mitochondrial homeostasis. Involved in mitochondrial deoxynucleoside triphosphates (dNTP) pool homeostasis and mitochondrial DNA (mtDNA) maintenance. May be involved in the regulation of reactive oxygen species metabolism and the control of oxidative phosphorylation. The chain is Mitochondrial inner membrane protein Mpv17 from Rattus norvegicus (Rat).